The primary structure comprises 247 residues: Chloride intracellular channel protein 2 (247 aa).

The interval Met-1–Leu-94 is N-terminal. A required for insertion into the membrane region spans residues Met-1–Pro-96. Glu-25 is a glutathione binding site. Positions Cys-30–Cys-33 match the G-site motif. Residues Cys-30 and Cys-33 are joined by a disulfide bond. A helical membrane pass occupies residues Phe-32–Val-52. The GST C-terminal domain occupies Asn-76–Tyr-239. The interval Ala-95–Tyr-106 is joint loop. A C-terminal region spans residues Lys-107–Ser-247. The foot loop stretch occupies residues Asn-151–Arg-171. His-227 provides a ligand contact to glutathione.

Belongs to the chloride channel CLIC family. As to quaternary structure, monomer. Interacts with TRAPPC2 and RYR2. Expressed in adult and fetal brain, heart, skeletal muscle, liver, lung, and spleen. Detected in adult stomach and testis. Expressed in fetal thymus and kidney.

Its subcellular location is the cytoplasm. It localises to the membrane. The catalysed reaction is chloride(in) = chloride(out). It carries out the reaction tert-butyl hydroperoxide + 2 glutathione = tert-butanol + glutathione disulfide + H2O. It catalyses the reaction cumene hydroperoxide + 2 glutathione = 2-phenylpropan-2-ol + glutathione disulfide + H2O. The channel conductance is regulated by pH. In the soluble state, catalyzes glutaredoxin-like thiol disulfide exchange reactions with reduced glutathione as electron donor. Displays weak glutathione peroxidase activity. Can insert into membranes and form chloride ion channels. Membrane insertion seems to be redox-regulated and may occur only under oxidizing conditions. Modulates the activity of RYR2 and inhibits calcium influx. This Homo sapiens (Human) protein is Chloride intracellular channel protein 2.